We begin with the raw amino-acid sequence, 410 residues long: Elongation factor Tu, chloroplastic (410 aa).

The 205-residue stretch at 10 to 214 (KPHINIGTIG…QVDKYIPTPQ (205 aa)) folds into the tr-type G domain. The segment at 19–26 (GHVDHGKT) is G1. 19–26 (GHVDHGKT) provides a ligand contact to GTP. Position 26 (Thr26) interacts with Mg(2+). Residues 60–64 (GITIN) form a G2 region. A G3 region spans residues 81–84 (DCPG). Residues 81-85 (DCPGH) and 136-139 (NKED) each bind GTP. The segment at 136–139 (NKED) is G4. Residues 174 to 176 (SAL) are G5.

This sequence belongs to the TRAFAC class translation factor GTPase superfamily. Classic translation factor GTPase family. EF-Tu/EF-1A subfamily.

The protein localises to the plastid. It is found in the chloroplast. It catalyses the reaction GTP + H2O = GDP + phosphate + H(+). GTP hydrolase that promotes the GTP-dependent binding of aminoacyl-tRNA to the A-site of ribosomes during protein biosynthesis. This is Elongation factor Tu, chloroplastic (tufA) from Mesostigma viride (Green alga).